A 279-amino-acid chain; its full sequence is uncharacterized protein (279 aa).

Helical transmembrane passes span glycine 31 to threonine 51, leucine 67 to isoleucine 87, and glutamate 115 to leucine 135.

It belongs to the transketolase family. It depends on thiamine diphosphate as a cofactor.

It is found in the cell membrane. This is an uncharacterized protein from Sinorhizobium fredii (strain NBRC 101917 / NGR234).